We begin with the raw amino-acid sequence, 534 residues long: Inorganic phosphate transporter 1-6 (534 aa).

At 1-29 (MGGGGGEQQQLEVLHALDVAKTQWYHFTA) the chain is on the cytoplasmic side. Residues 30 to 50 (IVVAGMGFFTDAYDLFCISLV) form a helical membrane-spanning segment. The Extracellular portion of the chain corresponds to 51 to 75 (TKLLGRIYYRVDGSPSPGTLPPHVS). A helical transmembrane segment spans residues 76–96 (ASVNGVAFVGTLSGQLFFGWL). Residues 97–104 (GDKLGRKR) are Cytoplasmic-facing. The chain crosses the membrane as a helical span at residues 105 to 125 (VYGITLMLMVLCSLASALSFG). The Extracellular portion of the chain corresponds to 126–127 (HT). The helical transmembrane segment at 128-148 (PTSVMATLCFFRFWLGFGIGG) threads the bilayer. The Cytoplasmic segment spans residues 149–168 (DYPLSATIMSEYANKKTRGA). A helical membrane pass occupies residues 169–189 (FIAAVFAMQGFGIITGGLVAI). At 190–216 (LVSASFRAAFPAPPYGEDPVASTPPQA) the chain is on the extracellular side. Residues 217 to 237 (DFVWRIILMLGALPAALTYYW) form a helical membrane-spanning segment. Residues 238 to 294 (RTKMPETARYTALVANNAKQAAADMSKVLQVVEMRNIGNNGGSRRPFGLFSGEFVRR) are Cytoplasmic-facing. The chain crosses the membrane as a helical span at residues 295–315 (HGLHLVGTSATWLLLDIAFYS). Topologically, residues 316–350 (QNLFQKDIFSAVGWIPKAATMSALEELFRIARAQT) are extracellular. A helical membrane pass occupies residues 351–371 (LIALCGTVPGYWFTVALIDVV). At 372-375 (GRFK) the chain is on the cytoplasmic side. A helical transmembrane segment spans residues 376–396 (IQAVGFFMMTLFMLTLALPYH). The Extracellular portion of the chain corresponds to 397 to 405 (HWTAPGKNH). A helical transmembrane segment spans residues 406–426 (VGFLLLYGLTFFFANFGPNST). At 427–445 (TFIVPAEIFPARLRATCHG) the chain is on the cytoplasmic side. A helical membrane pass occupies residues 446 to 466 (ISAASGKLGAIVGSFGFLYLA). Residues 467–486 (QSPDRSKTEHGYPPGIGVRN) are Extracellular-facing. A helical membrane pass occupies residues 487 to 507 (SLFLLAACNLLGLLFTFLVPE). Residues 508–534 (SKGKSLEEMSGDAEAQEEAPPPLQTVL) lie on the Cytoplasmic side of the membrane. Residues 514-534 (EEMSGDAEAQEEAPPPLQTVL) are disordered.

Belongs to the major facilitator superfamily. Phosphate:H(+) symporter (TC 2.A.1.9) family. Highly expressed in leaves and at low levels in roots. Expressed in leaf xylem parenchyma cells.

It is found in the membrane. Its function is as follows. High-affinity transporter for external inorganic phosphate (Pi). Probably involved in Pi uptake, translocation and internal transport throughout the plant. The protein is Inorganic phosphate transporter 1-6 (PHT1-6) of Oryza sativa subsp. japonica (Rice).